Here is a 373-residue protein sequence, read N- to C-terminus: Leucine aminopeptidase 1 (373 aa).

An N-terminal signal peptide occupies residues 1–18; the sequence is MKLLSVLALSATATSVLG. Residue Asn136 is glycosylated (N-linked (GlcNAc...) asparagine). Zn(2+) contacts are provided by His176 and Asp195. Residue Asn196 is glycosylated (N-linked (GlcNAc...) asparagine). Residues Glu234 and Asp261 each contribute to the Zn(2+) site. An N-linked (GlcNAc...) asparagine glycan is attached at Asn284. A disulfide bond links Cys310 and Cys314. Position 343 (His343) interacts with Zn(2+).

It belongs to the peptidase M28 family. M28E subfamily. As to quaternary structure, monomer. It depends on Zn(2+) as a cofactor.

It is found in the secreted. Its function is as follows. Extracellular aminopeptidase which contributes to pathogenicity. This is Leucine aminopeptidase 1 (LAP1) from Trichophyton equinum (Horse ringworm fungus).